The following is a 726-amino-acid chain: Probable cadmium-transporting ATPase (726 aa).

Positions 11-74 (DKQVYRVEGF…AGAFENLKVF (64 aa)) constitute an HMA domain. Residues Cys-22 and Cys-25 each coordinate Cd(2+). 5 helical membrane passes run 105 to 125 (STLLFATLLIAFGYLSHFVNG), 129 to 149 (LVTSMLFVGSIVIGGYSLFKV), 163 to 179 (TLMTVAVIGAAIIGEWA), 335 to 355 (IIMVIAALVAVVPPLFFGGSW), and 363 to 383 (LAVLVVGCPCALVISTPISIV). Asp-414 (4-aspartylphosphate intermediate) is an active-site residue. The next 2 helical transmembrane spans lie at 671–693 (LNIIKANITFAIGIKIIALLLVI) and 698–720 (TLWIAILSDMGATILVALNSLRL).

It belongs to the cation transport ATPase (P-type) (TC 3.A.3) family. Type IB subfamily.

The protein localises to the cell membrane. The catalysed reaction is Cd(2+)(in) + ATP + H2O = Cd(2+)(out) + ADP + phosphate + H(+). In terms of biological role, couples the hydrolysis of ATP with the export of cadmium. In Staphylococcus aureus (strain MRSA252), this protein is Probable cadmium-transporting ATPase (cadA).